The primary structure comprises 218 residues: uncharacterized protein (218 aa).

Belongs to the glycosyltransferase 2 family.

This is an uncharacterized protein from Mycobacterium bovis (strain ATCC BAA-935 / AF2122/97).